The sequence spans 155 residues: Ribosomal RNA large subunit methyltransferase H (155 aa).

S-adenosyl-L-methionine contacts are provided by residues leucine 72, glycine 103, and 122–127; that span reads LSPLTL.

Belongs to the RNA methyltransferase RlmH family. In terms of assembly, homodimer.

The protein resides in the cytoplasm. It catalyses the reaction pseudouridine(1915) in 23S rRNA + S-adenosyl-L-methionine = N(3)-methylpseudouridine(1915) in 23S rRNA + S-adenosyl-L-homocysteine + H(+). In terms of biological role, specifically methylates the pseudouridine at position 1915 (m3Psi1915) in 23S rRNA. This chain is Ribosomal RNA large subunit methyltransferase H, found in Mannheimia succiniciproducens (strain KCTC 0769BP / MBEL55E).